Here is a 412-residue protein sequence, read N- to C-terminus: Serine hydroxymethyltransferase (412 aa).

(6S)-5,6,7,8-tetrahydrofolate-binding positions include Leu117 and 121–123 (GHL). At Lys226 the chain carries N6-(pyridoxal phosphate)lysine.

The protein belongs to the SHMT family. Homodimer. It depends on pyridoxal 5'-phosphate as a cofactor.

It is found in the cytoplasm. It catalyses the reaction (6R)-5,10-methylene-5,6,7,8-tetrahydrofolate + glycine + H2O = (6S)-5,6,7,8-tetrahydrofolate + L-serine. The protein operates within one-carbon metabolism; tetrahydrofolate interconversion. It functions in the pathway amino-acid biosynthesis; glycine biosynthesis; glycine from L-serine: step 1/1. Its function is as follows. Catalyzes the reversible interconversion of serine and glycine with tetrahydrofolate (THF) serving as the one-carbon carrier. This reaction serves as the major source of one-carbon groups required for the biosynthesis of purines, thymidylate, methionine, and other important biomolecules. Also exhibits THF-independent aldolase activity toward beta-hydroxyamino acids, producing glycine and aldehydes, via a retro-aldol mechanism. The sequence is that of Serine hydroxymethyltransferase from Staphylococcus aureus (strain MW2).